Consider the following 309-residue polypeptide: Probable (S)-ureidoglycine aminohydrolase (309 aa).

An N-terminal signal peptide occupies residues 1–22 (MMLPRLLLLVVASALPLASVAA). The Mn(2+) site is built by E245, H247, H251, and Q285. Substrate is bound at residue E245. Residues Q285, Y297, and K301 each coordinate substrate.

It belongs to the UGHY family. In terms of assembly, homooctamer. Requires Mn(2+) as cofactor.

The protein resides in the endoplasmic reticulum. The enzyme catalyses (S)-2-ureidoglycine + H2O = (S)-ureidoglycolate + NH4(+). Its function is as follows. Involved in the catabolism of purine nucleotides. The sequential activity of AAH, UGLYAH and UAH allows a complete purine breakdown without the intermediate generation of urea. The polypeptide is Probable (S)-ureidoglycine aminohydrolase (UGLYAH) (Oryza sativa subsp. japonica (Rice)).